The sequence spans 301 residues: Ornithine carbamoyltransferase (301 aa).

Carbamoyl phosphate is bound by residues 46–49 (STRT), Gln-73, Arg-97, and 124–127 (HPCQ). Residues Asn-154, Asp-218, and 222–223 (SM) contribute to the L-ornithine site. Carbamoyl phosphate contacts are provided by residues 258-259 (CL) and Arg-286.

It belongs to the aspartate/ornithine carbamoyltransferase superfamily. OTCase family.

The protein resides in the cytoplasm. It carries out the reaction carbamoyl phosphate + L-ornithine = L-citrulline + phosphate + H(+). Its pathway is amino-acid biosynthesis; L-arginine biosynthesis; L-arginine from L-ornithine and carbamoyl phosphate: step 1/3. Functionally, reversibly catalyzes the transfer of the carbamoyl group from carbamoyl phosphate (CP) to the N(epsilon) atom of ornithine (ORN) to produce L-citrulline. This chain is Ornithine carbamoyltransferase (argF), found in Methanothermobacter thermautotrophicus (strain ATCC 29096 / DSM 1053 / JCM 10044 / NBRC 100330 / Delta H) (Methanobacterium thermoautotrophicum).